The sequence spans 144 residues: MSSLSILHLLLLLLALHAPQAKGLPVVTSRTPYSMLMKEIMDDLKKITPSPEGSLNSDEKNFLTKESLLQANLKVFMTFATDTFGSDSKIMKNLKEFQPVLPTATPTEDPIFIENKNLGDFRMKLEEYLVIIRNYLKSKNIWFS.

The N-terminal stretch at 1 to 17 (MSSLSILHLLLLLLALH) is a signal peptide.

The protein belongs to the IL-3 family. As to quaternary structure, monomer.

Its subcellular location is the secreted. Granulocyte/macrophage colony-stimulating factors are cytokines that act in hematopoiesis by controlling the production, differentiation, and function of 2 related white cell populations of the blood, the granulocytes and the monocytes-macrophages. Its function is as follows. This CSF induces granulocytes, macrophages, mast cells, stem cells, erythroid cells, eosinophils and megakaryocytes. This chain is Interleukin-3 (IL3), found in Bos taurus (Bovine).